Here is a 955-residue protein sequence, read N- to C-terminus: GPI inositol-deacylase B (955 aa).

A glycan (N-linked (GlcNAc...) asparagine) is linked at Asn-7. Residues 8–28 (ASVALWTVFTILTIWISFALH) form a helical membrane-spanning segment. The active site involves Ser-180. N-linked (GlcNAc...) asparagine glycosylation occurs at Asn-431. 4 consecutive transmembrane segments (helical) span residues 489–509 (IAFP…SGGV), 600–620 (LLFS…FWRY), 643–663 (YLSW…FEFI), and 703–723 (PIGV…VVVV). An N-linked (GlcNAc...) asparagine glycan is attached at Asn-753. 3 consecutive transmembrane segments (helical) span residues 772 to 792 (VIIA…LAFA), 840 to 860 (TMSV…AVWV), and 870 to 890 (IFSS…IENL). Asn-914 carries N-linked (GlcNAc...) asparagine glycosylation. Residues 919–939 (GMMHAFMIHHWFNLLAGWLLI) form a helical membrane-spanning segment. N-linked (GlcNAc...) asparagine glycosylation is present at Asn-945.

The protein belongs to the GPI inositol-deacylase family.

The protein resides in the endoplasmic reticulum membrane. Involved in inositol deacylation of GPI-anchored proteins which plays important roles in the quality control and ER-associated degradation of GPI-anchored proteins. This chain is GPI inositol-deacylase B (BST1B), found in Yarrowia lipolytica (strain CLIB 122 / E 150) (Yeast).